We begin with the raw amino-acid sequence, 209 residues long: Transcription factor atf31 (209 aa).

Polar residues predominate over residues 90–103 (SKSPSIISEASHNS). The interval 90–133 (SKSPSIISEASHNSPSRELDDSGDENTSKLTGTKQSMLKARNRQ) is disordered. One can recognise a bZIP domain in the interval 121 to 184 (GTKQSMLKAR…IKLRTLVFAH (64 aa)). The basic motif stretch occupies residues 123 to 161 (KQSMLKARNRQAAQKCRIKKKKYLQTLQDQVNYYTSENK). A leucine-zipper region spans residues 163-177 (LLQSANDLREEIIKL).

This sequence belongs to the bZIP family.

It localises to the nucleus. This is Transcription factor atf31 (atf31) from Schizosaccharomyces pombe (strain 972 / ATCC 24843) (Fission yeast).